The primary structure comprises 202 residues: Recombination protein RecR (202 aa).

A C4-type zinc finger spans residues 58 to 73 (CANCGNLTDKKLCDIC). One can recognise a Toprim domain in the interval 81–178 (SVITVVEDSM…KVSRIAMGVP (98 aa)).

Belongs to the RecR family.

In terms of biological role, may play a role in DNA repair. It seems to be involved in an RecBC-independent recombinational process of DNA repair. It may act with RecF and RecO. This chain is Recombination protein RecR, found in Finegoldia magna (strain ATCC 29328 / DSM 20472 / WAL 2508) (Peptostreptococcus magnus).